Reading from the N-terminus, the 406-residue chain is Tyrosine--tRNA ligase (406 aa).

Residue Y39 coordinates L-tyrosine. The short motif at 44 to 53 is the 'HIGH' region element; sequence PTADSLHVGH. L-tyrosine is bound by residues Y172 and Q176. Residues 232-236 carry the 'KMSKS' region motif; sequence KMGKT. K235 lines the ATP pocket. The region spanning 344–404 is the S4 RNA-binding domain; sequence KELLDVLVDR…LGKKKFYNIV (61 aa).

The protein belongs to the class-I aminoacyl-tRNA synthetase family. TyrS type 1 subfamily. In terms of assembly, homodimer.

The protein localises to the cytoplasm. It catalyses the reaction tRNA(Tyr) + L-tyrosine + ATP = L-tyrosyl-tRNA(Tyr) + AMP + diphosphate + H(+). Catalyzes the attachment of tyrosine to tRNA(Tyr) in a two-step reaction: tyrosine is first activated by ATP to form Tyr-AMP and then transferred to the acceptor end of tRNA(Tyr). The sequence is that of Tyrosine--tRNA ligase from Fusobacterium nucleatum subsp. nucleatum (strain ATCC 25586 / DSM 15643 / BCRC 10681 / CIP 101130 / JCM 8532 / KCTC 2640 / LMG 13131 / VPI 4355).